The primary structure comprises 339 residues: Type IV secretion system protein PtlH homolog (339 aa).

It belongs to the GSP E family.

This is Type IV secretion system protein PtlH homolog (ptlH) from Bordetella parapertussis (strain 12822 / ATCC BAA-587 / NCTC 13253).